The sequence spans 376 residues: 26S proteasome non-ATPase regulatory subunit 4 (376 aa).

The VWFA domain occupies 5-188 (STMVCVDNSE…LADALISSPI (184 aa)). A Glycyl lysine isopeptide (Lys-Gly) (interchain with G-Cter in SUMO2) cross-link involves residue Lys122. Positions 197–262 (LGLGASDFEF…TEDSDDALLK (66 aa)) are interaction with UBQLN1. Residues 211–230 (SADPELALALRVSMEEQRQR) enclose the UIM 1 domain. Basic and acidic residues predominate over residues 224-237 (MEEQRQRQEEEARR). The disordered stretch occupies residues 224-257 (MEEQRQRQEEEARRAAAASAAEAGIATPGTEDSD). Phosphothreonine is present on residues Thr250 and Thr253. Residues Ser256 and Ala259 each carry the phosphoserine modification. The region spanning 282 to 301 (TEEEQIAYAMQMSLQGTEFS) is the UIM 2 domain. A disordered region spans residues 355-376 (MGALASQATKDGKNDKKEEEKK). A Phosphoserine modification is found at Ser360. The span at 364-376 (KDGKNDKKEEEKK) shows a compositional bias: basic and acidic residues.

Belongs to the proteasome subunit S5A family. As to quaternary structure, component of the 19S proteasome regulatory particle complex. The 26S proteasome consists of a 20S core particle (CP) and two 19S regulatory subunits (RP). The regulatory particle is made of a lid composed of 9 subunits, a base containing 6 ATPases and few additional components including PSMD4. Interacts with NUB1. Interacts with SQSTM1. Interacts with UBQLN4. Interacts with UBE3A. Interacts with UBQLN1 (via ubiquitin-like domain). Interacts with DDI2. As to expression, isoform Rpn10A is ubiquitous whereas isoform Rpn10E is mostly expressed in the embryonic brain.

Functionally, component of the 26S proteasome, a multiprotein complex involved in the ATP-dependent degradation of ubiquitinated proteins. This complex plays a key role in the maintenance of protein homeostasis by removing misfolded or damaged proteins, which could impair cellular functions, and by removing proteins whose functions are no longer required. Therefore, the proteasome participates in numerous cellular processes, including cell cycle progression, apoptosis, or DNA damage repair. PSMD4 acts as an ubiquitin receptor subunit through ubiquitin-interacting motifs and selects ubiquitin-conjugates for destruction. Displays a preferred selectivity for longer polyubiquitin chains. In Mus musculus (Mouse), this protein is 26S proteasome non-ATPase regulatory subunit 4 (Psmd4).